The following is a 67-amino-acid chain: Alpha-conotoxin-like Qc1.1b (67 aa).

The first 21 residues, 1–21 (MGMRMMFTMFLLVVLAITVVS), serve as a signal peptide directing secretion. Positions 22 to 46 (FTSDHASDGRNTAANDKASKLMALR) are excised as a propeptide. Intrachain disulfides connect Cys49–Cys55 and Cys50–Cys63. The segment at 51–53 (DNP) is lacks the Ser-Xaa-Pro motif that is crucial for potent interaction with nAChR.

It belongs to the conotoxin A superfamily. As to expression, expressed by the venom duct.

The protein localises to the secreted. Its function is as follows. Alpha-conotoxins act on postsynaptic membranes, they bind to the nicotinic acetylcholine receptors (nAChR) and thus inhibit them. Has possibly a distinct nAChR binding mode from other alpha-conotoxins, due to a different three residue motif (lacks the Ser-Xaa-Pro motif). This chain is Alpha-conotoxin-like Qc1.1b, found in Conus quercinus (Oak cone).